The sequence spans 569 residues: Methionine--tRNA ligase (569 aa).

Positions 11-21 match the 'HIGH' region motif; the sequence is PYINGIKHLGN. Zn(2+) is bound by residues C143, C146, C156, and C159. A 'KMSKS' region motif is present at residues 342–346; the sequence is KFSTS. T345 contributes to the ATP binding site.

The protein belongs to the class-I aminoacyl-tRNA synthetase family. MetG type 1 subfamily. Monomer. Zn(2+) is required as a cofactor.

The protein resides in the cytoplasm. The catalysed reaction is tRNA(Met) + L-methionine + ATP = L-methionyl-tRNA(Met) + AMP + diphosphate. Functionally, is required not only for elongation of protein synthesis but also for the initiation of all mRNA translation through initiator tRNA(fMet) aminoacylation. This is Methionine--tRNA ligase from Caulobacter vibrioides (strain ATCC 19089 / CIP 103742 / CB 15) (Caulobacter crescentus).